The chain runs to 354 residues: UDP-N-acetylglucosamine--N-acetylmuramyl-(pentapeptide) pyrophosphoryl-undecaprenol N-acetylglucosamine transferase (354 aa).

Residues 15–17, Asn-127, Arg-163, Ser-191, Ile-244, 263–268, and Gln-288 each bind UDP-N-acetyl-alpha-D-glucosamine; these read TGG and ALTVSE.

This sequence belongs to the glycosyltransferase 28 family. MurG subfamily.

The protein localises to the cell inner membrane. It catalyses the reaction di-trans,octa-cis-undecaprenyl diphospho-N-acetyl-alpha-D-muramoyl-L-alanyl-D-glutamyl-meso-2,6-diaminopimeloyl-D-alanyl-D-alanine + UDP-N-acetyl-alpha-D-glucosamine = di-trans,octa-cis-undecaprenyl diphospho-[N-acetyl-alpha-D-glucosaminyl-(1-&gt;4)]-N-acetyl-alpha-D-muramoyl-L-alanyl-D-glutamyl-meso-2,6-diaminopimeloyl-D-alanyl-D-alanine + UDP + H(+). The protein operates within cell wall biogenesis; peptidoglycan biosynthesis. Its function is as follows. Cell wall formation. Catalyzes the transfer of a GlcNAc subunit on undecaprenyl-pyrophosphoryl-MurNAc-pentapeptide (lipid intermediate I) to form undecaprenyl-pyrophosphoryl-MurNAc-(pentapeptide)GlcNAc (lipid intermediate II). The protein is UDP-N-acetylglucosamine--N-acetylmuramyl-(pentapeptide) pyrophosphoryl-undecaprenol N-acetylglucosamine transferase of Aliivibrio fischeri (strain ATCC 700601 / ES114) (Vibrio fischeri).